The sequence spans 324 residues: Galectin-4 (324 aa).

2 consecutive Galectin domains span residues 19-150 (YKRP…INFL) and 196-324 (YVGT…YVQI). Residue 257–263 (WGSEERK) participates in a beta-D-galactoside binding. At S259 the chain carries Phosphoserine.

As to quaternary structure, monomer. Highly expressed in full-length form in small and large intestine and stomach but was not detected in other tissues including lung, liver, kidney and spleen.

Functionally, galectin that binds lactose and a related range of sugars. This Rattus norvegicus (Rat) protein is Galectin-4 (Lgals4).